The sequence spans 104 residues: uncharacterized protein (104 aa).

A helical membrane pass occupies residues 81 to 97 (CLLMLPCISVVMSISSV).

It localises to the cell membrane. This is an uncharacterized protein from Bacillus subtilis (strain 168).